The following is a 356-amino-acid chain: Glutamine synthetase nodule isozyme (356 aa).

One can recognise a GS beta-grasp domain in the interval 19–99 (IIAEYIWVGG…VICDVYTPAG (81 aa)). The 251-residue stretch at 106–356 (KRHNAAKIFS…IAETTLLWKP (251 aa)) folds into the GS catalytic domain.

The protein belongs to the glutamine synthetase family. In terms of assembly, homooctamer. As to expression, found at highest levels in root nodules.

Its subcellular location is the cytoplasm. It carries out the reaction L-glutamate + NH4(+) + ATP = L-glutamine + ADP + phosphate + H(+). This Medicago sativa (Alfalfa) protein is Glutamine synthetase nodule isozyme (GS1).